A 426-amino-acid polypeptide reads, in one-letter code: Chordin-like protein 2 (426 aa).

The first 25 residues, 1–25 (MVPGVRIIPSLLGLVMFWLPLDSQA), serve as a signal peptide directing secretion. VWFC domains follow at residues 31–96 (KVCL…PRCV) and 109–175 (KSCQ…QTCK). N-linked (GlcNAc...) asparagine glycosylation occurs at Asn114. Ser182 is modified (phosphoserine). A compositionally biased stretch (polar residues) spans 182 to 191 (STEENLTQLQ). The interval 182-216 (STEENLTQLQHGERHSQDPCSERRGPSTPAPTSLS) is disordered. N-linked (GlcNAc...) asparagine glycosylation occurs at Asn186. Residues 192 to 206 (HGERHSQDPCSERRG) are compositionally biased toward basic and acidic residues. Residues 207–216 (PSTPAPTSLS) show a composition bias toward low complexity. The VWFC 3 domain occupies 246 to 311 (KACTHNGKTY…VAGKCCKICP (66 aa)).

In terms of assembly, interacts with GDF5. May interact with INHBA, BMP2, BMP4, BMP5, BMP6, and BMP7. As to expression, weakly expressed in the liver and kidney. In reproductive organs expressed in connective tissues such as ligaments of the ovary and oviduct in females, and of testis, epididymis and certain male accessory sex glands in males. Expression was high in uterine myometrium. Weakly expressed in cartilage of the femoral head, patella, articular facets of vertebrae, in the annulus fibrosus of intervertebral disks. In normal cartilage, expression was confined to articular chondrocytes especially in the superficial zone.

It localises to the secreted. In terms of biological role, implicated in tumor angiogenesis. May inhibits BMPs activity by blocking their interaction with their receptors. Has a negative regulator effect on the cartilage formation/regeneration from immature mesenchymal cells, by preventing or reducing the rate of matrix accumulation. May play a role during myoblast and osteoblast differentiation, and maturation. This is Chordin-like protein 2 (Chrdl2) from Mus musculus (Mouse).